Here is a 963-residue protein sequence, read N- to C-terminus: Importin-13 (963 aa).

HEAT repeat units lie at residues 24–54 (ENVE…QAQA), 56–88 (PQAW…KISR), 95–135 (TDQY…LSMM), 142–179 (AVAD…EFQT), 194–231 (LAVE…SWVQ), 236–268 (LQDC…NAIS), 276–325 (VNTL…ALLD), 330–372 (WQSF…DDIL), 375–438 (EAEK…YEML), 440–476 (AELL…FQSI), 487–522 (VVPG…WLAD), 524–558 (PVMI…CREC), 562–600 (LPPY…LLSA), 603–648 (VEEI…SNLF), 676–716 (PVVV…VKTL), 720–754 (FAPM…VHIF), 761–803 (FPPI…ALKR), 815–845 (VKAV…TELL), 860–893 (EDGR…FALN), and 897–931 (FSLL…QQIL). The Importin N-terminal domain maps to 45 to 111 (AQKWLMQAQA…KAQLFTQITR (67 aa)).

Belongs to the importin beta family. As to quaternary structure, interacts with UBC9, RAN, RBM8A, eIF-1A and PAX6.

It localises to the cytoplasm. It is found in the nucleus. Functionally, functions in nuclear protein import as nuclear transport receptor. Serves as receptor for nuclear localization signals (NLS) in cargo substrates. Is thought to mediate docking of the importin/substrate complex to the nuclear pore complex (NPC) through binding to nucleoporin and the complex is subsequently translocated through the pore by an energy requiring, Ran-dependent mechanism. At the nucleoplasmic side of the NPC, Ran binds to the importin, the importin/substrate complex dissociates and importin is re-exported from the nucleus to the cytoplasm where GTP hydrolysis releases Ran. The directionality of nuclear import is thought to be conferred by an asymmetric distribution of the GTP- and GDP-bound forms of Ran between the cytoplasm and nucleus. Mediates the nuclear import of UBC9, the RBM8A/MAGOH complex, PAX6 and probably other members of the paired homeobox family. Also mediates nuclear export of eIF-1A, and the cytoplasmic release of eIF-1A is triggered by the loading of import substrates onto IPO13. The polypeptide is Importin-13 (IPO13) (Bos taurus (Bovine)).